The following is a 741-amino-acid chain: Catalase-peroxidase 2 (741 aa).

Residues 1-27 form the signal peptide; it reads MKINTLPTLSALTLAMSLALGAGMATA. The segment at residues 106-229 is a cross-link (tryptophyl-tyrosyl-methioninium (Trp-Tyr) (with M-255)); sequence WHSAGVYRIF…MGATQMGLIY (124 aa). His-107 acts as the Proton acceptor in catalysis. The segment at residues 229–255 is a cross-link (tryptophyl-tyrosyl-methioninium (Tyr-Met) (with W-106)); sequence YVNPEGPNGVPDPLASAKEIRDTFGRM. Heme b is bound at residue His-270.

It belongs to the peroxidase family. Peroxidase/catalase subfamily. In terms of assembly, homodimer or homotetramer. Heme b is required as a cofactor. In terms of processing, formation of the three residue Trp-Tyr-Met cross-link is important for the catalase, but not the peroxidase activity of the enzyme.

The enzyme catalyses H2O2 + AH2 = A + 2 H2O. It catalyses the reaction 2 H2O2 = O2 + 2 H2O. Functionally, bifunctional enzyme with both catalase and broad-spectrum peroxidase activity. The protein is Catalase-peroxidase 2 of Shewanella oneidensis (strain ATCC 700550 / JCM 31522 / CIP 106686 / LMG 19005 / NCIMB 14063 / MR-1).